The primary structure comprises 111 residues: Distal membrane-arm assembly complex protein 1 (111 aa).

A compositionally biased stretch (polar residues) spans Met1 to Phe11. The tract at residues Met1–Asp40 is disordered. Residues Thr18–Ala38 show a composition bias toward low complexity. 2 helical membrane passes run Val51–Ala68 and Gly81–Val101.

In terms of assembly, interacts with incompletely assembled mitochondrial NADH:ubiquinone oxidoreductase complex (complex I).

Its subcellular location is the mitochondrion inner membrane. Functionally, required for the assembly of the mitochondrial NADH:ubiquinone oxidoreductase complex (complex I). Involved in the assembly of the distal region of complex I. This Mus musculus (Mouse) protein is Distal membrane-arm assembly complex protein 1.